A 174-amino-acid polypeptide reads, in one-letter code: Small t antigen (174 aa).

Residue methionine 1 is modified to N-acetylmethionine; by host. The 64-residue stretch at 12 to 75 (QLMDLLGLER…VKYAHQPDFG (64 aa)) folds into the J domain. A C4-type; atypical zinc finger spans residues 103-116 (CAKKMSANCICLLC). The segment at 122 to 143 (HENRKLYRKDPLVWVDCYCFDC) adopts an H1C3-type; atypical zinc-finger fold.

In terms of assembly, interacts with host PPP2R1A; the interaction inhibits PP2A activity.

The protein localises to the host cytoplasm. The protein resides in the host nucleus. Functionally, promotes efficient viral genome replication by accelerating both G1 and S phase progression of the cell cycle. Inhibits host PP2A by binding to the A subunit, thereby displacing lower affinity regulatory B subunit. Inactivation of PP2A in turn results in the transactivation of cyclin A and cyclin D1 promoters. Late during the infection cycle, ST may induce dephosphorylation of host eIF4E-binding protein EIF4EBP1 leading to the inhibition of cap-dependent translation. May establish and maintain high levels of viral genomes during persistent infection in cell culture. The polypeptide is Small t antigen (Simian virus 40 (SV40)).